The primary structure comprises 205 residues: Pectinesterase inhibitor 3 (205 aa).

The N-terminal stretch at 1–25 (MAPTQNLFLVAIAFAVIFTASTVHG) is a signal peptide. Cystine bridges form between Cys38-Cys47 and Cys104-Cys156.

This sequence belongs to the PMEI family. Expressed in apical meristem.

The protein localises to the secreted. Its subcellular location is the extracellular space. It is found in the apoplast. Functionally, pectin methylesterase (PME) inhibitor that can target PMEs (e.g. PME2 and PME3) in a pH-dependent manner, mainly in slightly acidic conditions (pH 6.3 and 5.0) but not at pH 7.5; this processus relies on changes in the protonation of amino acids involved in intermolecular and intramolecular interactions. Regulates de-methylesterification of pectins in the apical meristem and affects primordia formation and phyllotactic patterning. This chain is Pectinesterase inhibitor 3, found in Arabidopsis thaliana (Mouse-ear cress).